The chain runs to 39 residues: Potassium channel toxin alpha-KTx 2.8 (39 aa).

3 cysteine pairs are disulfide-bonded: cysteine 7-cysteine 29, cysteine 13-cysteine 34, and cysteine 17-cysteine 36.

This sequence belongs to the short scorpion toxin superfamily. Potassium channel inhibitor family. Alpha-KTx 02 subfamily. Expressed by the venom gland.

Its subcellular location is the secreted. Functionally, blocks Kv1.3/KCNA3 voltage-gated potassium channels of human T-lymphocytes (Kd=0.71 nM). The protein is Potassium channel toxin alpha-KTx 2.8 of Centruroides elegans (Bark scorpion).